Reading from the N-terminus, the 605-residue chain is Insulin-like growth factor-binding protein complex acid labile subunit (605 aa).

The signal sequence occupies residues 1-27 (MALRKGGLALALLLLSWVALGPRSLEG). An LRRNT domain is found at 32–74 (TPGEAEGPACPAACVCSYDDDADELSVFCSSRNLTRLPDGVPG). 2 cysteine pairs are disulfide-bonded: Cys41–Cys47 and Cys45–Cys60. 3 N-linked (GlcNAc...) asparagine glycosylation sites follow: Asn64, Asn85, and Asn96. LRR repeat units follow at residues 75 to 96 (GTQA…AFQN), 99 to 120 (SLGF…ALLG), 123 to 144 (NLCH…TFAH), 147 to 168 (ALAS…LFEG), 171 to 192 (SLWD…AFRG), 195 to 216 (SLRE…LFSG), 219 to 240 (ELRE…VFVQ), 243 to 264 (RLQK…AFLG), 267 to 288 (ALRW…TFPG), 291 to 312 (GLRV…TFKD), 315 to 336 (FLEE…SFEG), 339 to 360 (QLEV…AFLG), 363 to 384 (NVAV…VFRG), 387 to 408 (KLHS…TFTG), 411 to 432 (GLRR…SLWG), 435 to 456 (ELLE…LFQG), 459 to 480 (KLEY…ALGP), 483 to 504 (RAFW…LLAP), and 507 to 528 (RLRY…PPGL). Asn368 carries N-linked (GlcNAc...) asparagine glycosylation. A glycan (N-linked (GlcNAc...) asparagine) is linked at Asn515. The region spanning 536 to 605 (NPWDCGCPLK…DLSEAHFAPC (70 aa)) is the LRRCT domain. Disulfide bonds link Cys540-Cys583, Cys542-Cys605, and Cys566-Cys571. Asn580 is a glycosylation site (N-linked (GlcNAc...) asparagine).

In terms of assembly, forms a ternary complex with IGF1 and IGFBP3. Plasma.

It localises to the secreted. It is found in the extracellular space. Functionally, involved in protein-protein interactions that result in protein complexes, receptor-ligand binding or cell adhesion. This Homo sapiens (Human) protein is Insulin-like growth factor-binding protein complex acid labile subunit (IGFALS).